Here is a 326-residue protein sequence, read N- to C-terminus: Ribose-phosphate pyrophosphokinase (326 aa).

ATP is bound by residues 45–47 (NGE) and 104–105 (RQ). Mg(2+) is bound by residues His138 and Asp178. Lys202 is an active-site residue. Residues Arg204, Asp230, and 234-238 (DTGGT) each bind D-ribose 5-phosphate.

This sequence belongs to the ribose-phosphate pyrophosphokinase family. Class I subfamily. In terms of assembly, homohexamer. Mg(2+) serves as cofactor.

It is found in the cytoplasm. It catalyses the reaction D-ribose 5-phosphate + ATP = 5-phospho-alpha-D-ribose 1-diphosphate + AMP + H(+). The protein operates within metabolic intermediate biosynthesis; 5-phospho-alpha-D-ribose 1-diphosphate biosynthesis; 5-phospho-alpha-D-ribose 1-diphosphate from D-ribose 5-phosphate (route I): step 1/1. In terms of biological role, involved in the biosynthesis of the central metabolite phospho-alpha-D-ribosyl-1-pyrophosphate (PRPP) via the transfer of pyrophosphoryl group from ATP to 1-hydroxyl of ribose-5-phosphate (Rib-5-P). This Mycobacterium bovis (strain ATCC BAA-935 / AF2122/97) protein is Ribose-phosphate pyrophosphokinase.